The sequence spans 238 residues: Small ribosomal subunit protein eS4 (238 aa).

The S4 RNA-binding domain occupies 38 to 109 (IPLALVIRDV…DERSYYALVP (72 aa)).

This sequence belongs to the eukaryotic ribosomal protein eS4 family.

This Pyrobaculum neutrophilum (strain DSM 2338 / JCM 9278 / NBRC 100436 / V24Sta) (Thermoproteus neutrophilus) protein is Small ribosomal subunit protein eS4.